The following is a 515-amino-acid chain: Nectin-1 (515 aa).

A signal peptide spans methionine 1–threonine 30. The region spanning glutamine 31 to threonine 141 is the Ig-like V-type domain. Residues glutamine 31–alanine 354 are Extracellular-facing. N-linked (GlcNAc...) asparagine glycans are attached at residues asparagine 36, asparagine 72, asparagine 139, asparagine 202, asparagine 286, asparagine 297, and asparagine 332. Cysteine 51 and cysteine 124 are oxidised to a cystine. Ig-like C2-type domains are found at residues lysine 145–valine 243 and proline 247–threonine 334. 2 cysteine pairs are disulfide-bonded: cysteine 172-cysteine 226 and cysteine 269-cysteine 316. Residues tryptophan 282–threonine 299 are interaction with FGFR. A helical transmembrane segment spans residues isoleucine 355 to valine 375. Topologically, residues alanine 376–valine 515 are cytoplasmic. The tract at residues tyrosine 399 to tyrosine 486 is disordered. 3 positions are modified to phosphoserine: serine 421, serine 433, and serine 434. Tyrosine 435 is subject to Phosphotyrosine. The span at glycine 447–arginine 464 shows a compositional bias: basic and acidic residues. The residue at position 509 (serine 509) is a Phosphoserine.

The protein belongs to the nectin family. Cis- and trans-homodimer. Can form trans-heterodimers with NECTIN3 and with NECTIN4. Interaction between NECTIN1 and NECTIN3 on the pre- and postsynaptic sites, respectively, initiates the formation of puncta adherentia junctions between axons and dendrites. Interacts (via cytoplasmic domain) with AFDN (via PDZ domain); this interaction recruits NECTIN1 to cadherin-based adherens junctions and provides a connection with the actin cytoskeleton. Interacts with integrin alphaV/beta3. Interacts (via Ig-like C2-type domain 2) with FGFR1, FGFR2 and FGFR3. As to quaternary structure, (Microbial infection) Interacts with herpes pseudorabies virus/PRV envelope glycoprotein D.

It is found in the cell membrane. Its subcellular location is the cell junction. The protein localises to the adherens junction. It localises to the presynaptic cell membrane. Its function is as follows. Cell adhesion molecule that promotes cell-cell contacts and plays important roles in the development of the nervous system. Acts by forming homophilic or heterophilic trans-dimers. Heterophilic interactions have been detected between NECTIN1 and NECTIN3 and between NECTIN1 and NECTIN4. Involved in axon guidance by promoting contacts between the commissural axons and the floor plate cells. Involved in synaptogegesis. Has some neurite outgrowth-promoting activity. Promotes formation of checkerboard-like cellular pattern of hair cells and supporting cells in the auditory epithelium via heterophilic interaction with NECTIN3: NECTIN1 is present in the membrane of hair cells and associates with NECTIN3 on supporting cells, thereby mediating heterotypic adhesion between these two cell types. Required for enamel mineralization. (Microbial infection) Acts as a receptor for pseudorabies virus/PRV. This chain is Nectin-1, found in Mus musculus (Mouse).